The chain runs to 339 residues: Probable cytosolic iron-sulfur protein assembly protein CIAO1 (339 aa).

WD repeat units follow at residues 14–53 (HPDS…WICK), 59–98 (GHQR…FECV), 103–142 (GHEN…EYEC), 148–187 (SHTQ…WVCC), 192–231 (GHES…NEQG), 250–289 (FHSR…DPQQ), and 301–339 (AHSQ…SEGI). The LYR motif; required for interaction with HSC20 signature appears at 176-178 (LYR).

It belongs to the WD repeat CIA1 family. In terms of assembly, component of the CIA complex. Interacts with CIAO2A and forms a complex with CIAO2B and MMS19; the interactions with CIAO2A and CIAO2B are mutually exclusive. Interacts with CHD1L, ERCC2, IREB2 and POLD1. Component of the MMXD complex, which includes CIAO1, ERCC2, CIAO2B, MMS19 and SLC25A5. Interacts with WT1. Interacts with CIAO3. Interacts (via LYR motif) with HSC20.

It is found in the cytoplasm. Key component of the cytosolic iron-sulfur protein assembly (CIA) complex, a multiprotein complex that mediates the incorporation of iron-sulfur cluster into extramitochondrial Fe/S proteins. As a CIA complex component, interacts specifically with CIAO2A or CIAO2B and MMS19 to assist different branches of iron-sulfur protein assembly, depending of its interactors. The complex CIAO1:CIAO2B:MMS19 binds to and facilitates the assembly of most cytosolic-nuclear Fe/S proteins. CIAO1:CIAO2A specifically matures ACO1 and stabilizes IREB2. Seems to specifically modulate the transactivation activity of WT1. As part of the mitotic spindle-associated MMXD complex it may play a role in chromosome segregation. The chain is Probable cytosolic iron-sulfur protein assembly protein CIAO1 from Bos taurus (Bovine).